Consider the following 302-residue polypeptide: Protein transport protein SEC13 homolog A (302 aa).

WD repeat units follow at residues 9–48 (GHSD…GSQH), 54–95 (GHRG…QWTQ), 101–142 (DHKV…GWDT), 148–201 (AHPV…WKMD), 208–251 (KHTD…EQWE), and 257–296 (DFKT…EWEQ).

Belongs to the WD repeat SEC13 family. Interacts with MAG5, SEC31A and SEC31B.

The protein localises to the golgi apparatus. It is found in the endoplasmic reticulum. In terms of biological role, required for protein transport from the endoplasmic reticulum to the Golgi apparatus. This Arabidopsis thaliana (Mouse-ear cress) protein is Protein transport protein SEC13 homolog A.